The chain runs to 236 residues: 2,3,4,5-tetrahydropyridine-2,6-dicarboxylate N-acetyltransferase (236 aa).

Belongs to the transferase hexapeptide repeat family. DapH subfamily.

It catalyses the reaction (S)-2,3,4,5-tetrahydrodipicolinate + acetyl-CoA + H2O = L-2-acetamido-6-oxoheptanedioate + CoA. The protein operates within amino-acid biosynthesis; L-lysine biosynthesis via DAP pathway; LL-2,6-diaminopimelate from (S)-tetrahydrodipicolinate (acetylase route): step 1/3. Its function is as follows. Catalyzes the transfer of an acetyl group from acetyl-CoA to tetrahydrodipicolinate. In Clostridium perfringens (strain ATCC 13124 / DSM 756 / JCM 1290 / NCIMB 6125 / NCTC 8237 / Type A), this protein is 2,3,4,5-tetrahydropyridine-2,6-dicarboxylate N-acetyltransferase.